The chain runs to 361 residues: 1D-myo-inositol 2-acetamido-2-deoxy-alpha-D-glucopyranoside deacetylase (361 aa).

Positions 1 to 12 (MTTTPQPPPQPD) are enriched in pro residues. Residues 1–27 (MTTTPQPPPQPDETPEGAAGAATAGRD) form a disordered region. Residues 16–25 (EGAAGAATAG) are compositionally biased toward low complexity. Zn(2+) is bound by residues H66, D69, and H207.

Belongs to the MshB deacetylase family. It depends on Zn(2+) as a cofactor.

The catalysed reaction is 1D-myo-inositol 2-acetamido-2-deoxy-alpha-D-glucopyranoside + H2O = 1D-myo-inositol 2-amino-2-deoxy-alpha-D-glucopyranoside + acetate. Catalyzes the deacetylation of 1D-myo-inositol 2-acetamido-2-deoxy-alpha-D-glucopyranoside (GlcNAc-Ins) in the mycothiol biosynthesis pathway. The polypeptide is 1D-myo-inositol 2-acetamido-2-deoxy-alpha-D-glucopyranoside deacetylase (Kineococcus radiotolerans (strain ATCC BAA-149 / DSM 14245 / SRS30216)).